We begin with the raw amino-acid sequence, 510 residues long: Mitochondrial metal transporter 1 (510 aa).

Residues 120–141 (ADKPSSLNLHSHTHSHGHTHSH) are disordered. Residues 130–141 (SHTHSHGHTHSH) are compositionally biased toward basic residues. A run of 6 helical transmembrane segments spans residues 165–185 (WVGLGVNVGIAIGKFFGGIVF), 194–214 (AIHAISDMVSDLLTLLSVGLA), 241–261 (LAMAGISIGWSSLCALVGPVI), 286–306 (VTDINAAWIAAASIAAKEWIF), 333–353 (LTSLVALVAISTGYLVNIQSL), and 356–376 (IGGLIVSGLIIKAGGEGMCIA).

This sequence belongs to the cation diffusion facilitator (CDF) transporter (TC 2.A.4) family. SLC30A subfamily.

The protein resides in the mitochondrion membrane. Mitochondrial metal transporter involved in mitochondrial iron accumulation. The sequence is that of Mitochondrial metal transporter 1 (MMT1) from Saccharomyces cerevisiae (strain ATCC 204508 / S288c) (Baker's yeast).